The chain runs to 412 residues: POU domain, class 4, transcription factor 2 (412 aa).

The segment at 29-96 (LHSASPGSSA…SEAMRRACLP (68 aa)) is disordered. Positions 31 to 53 (SASPGSSAPAAPSASSPSSSSNA) are enriched in low complexity. 2 stretches are compositionally biased toward gly residues: residues 54 to 70 (GSGG…GGGR) and 78 to 87 (GSGGGGGGGS). The tract at residues 94–240 (CLPTPPSNIF…MHQAALSMAH (147 aa)) is required for transcriptional activation. A POU-IV box motif is present at residues 113–122 (RAEALAAVDI). The disordered stretch occupies residues 123–191 (VSQSKSHHHH…HHHHQPHQAL (69 aa)). The segment covering 127-138 (KSHHHHPPHHSP) has biased composition (basic residues). Over residues 152-169 (PCTSAASSSSVPISHPSA) the composition is skewed to low complexity. Residues 173-187 (THHHHHHHHHHHHQP) are compositionally biased toward basic residues. A Nuclear speckle targeting signal motif is present at residues 174–188 (HHHHHHHHHHHHQPH). The tract at residues 241-412 (AHGLPSHMGC…QKRMKYSAGI (172 aa)) is required for DNA-binding and transcriptional repression. Residues 253–330 (DVDADPRDLE…ILQAWLEEAE (78 aa)) form the POU-specific domain. Positions 348 to 407 (KKRKRTSIAAPEKRSLEAYFAIQPRPSSEKIAAIAEKLDLKKNVVRVWFCNQRQKQKRMK) form a DNA-binding region, homeobox.

This sequence belongs to the POU transcription factor family. Class-4 subfamily. In terms of assembly, interacts with POU4F1; this interaction inhibits both POU4F1 DNA-binding and transcriptional activities. Interacts (C-terminus) with ESR1 (via DNA-binding domain); this interaction increases the estrogen receptor ESR1 transcriptional activity in a DNA- and ligand 17-beta-estradiol-independent manner. Interacts (via C-terminus) with TP53 (via N-terminus). Interacts with DLX1 (via homeobox DNA-binding domain); this interaction suppresses DLX1-mediated transcriptional activity in postnatal retina enhancing retinal ganglion cell (RGC) differentiation. Interacts with DLX2 (via homeobox DNA-binding domain); this interaction enhances RGC differentiation. Interacts (via C-terminus) with ISL1 (via C-terminus). Interacts with ISL2. Interacts with LHX2. Expressed in the heart, brain and spinal cord. Expressed in cardiomyocytes (at protein level). Expressed in brain and spinal cord. Expressed in dorsal root ganglion (RGD) neurons.

It localises to the nucleus. Its subcellular location is the nucleus speckle. It is found in the cytoplasm. Tissue-specific DNA-binding transcription factor involved in the development and differentiation of target cells. Functions either as activator or repressor modulating the rate of target gene transcription through RNA polymerase II enzyme in a promoter-dependent manner. Binds to the consensus octamer motif 5'-AT[A/T]A[T/A]T[A/T]A-3' of promoter of target genes. Plays a fundamental role in the gene regulatory network essential for retinal ganglion cell (RGC) differentiation. Binds to an octamer site to form a ternary complex with ISL1; cooperates positively with ISL1 and ISL2 to potentiate transcriptional activation of RGC target genes being involved in RGC fate commitment in the developing retina and RGC axon formation and pathfinding. Inhibits DLX1 and DLX2 transcriptional activities preventing DLX1- and DLX2-mediated ability to promote amacrine cell fate specification. In cooperation with TP53 potentiates transcriptional activation of BAX promoter activity increasing neuronal cell apoptosis. Negatively regulates BAX promoter activity in the absence of TP53. Acts as a transcriptional coactivator via its interaction with the transcription factor ESR1 by enhancing its effect on estrogen response element (ERE)-containing promoter. Antagonizes the transcriptional stimulatory activity of POU4F1 by preventing its binding to an octamer motif. Involved in TNFSF11-mediated terminal osteoclast differentiation. The protein is POU domain, class 4, transcription factor 2 of Rattus norvegicus (Rat).